Consider the following 243-residue polypeptide: Pyridoxine 5'-phosphate synthase (243 aa).

Asparagine 9 contacts 3-amino-2-oxopropyl phosphate. 11–12 (DH) contributes to the 1-deoxy-D-xylulose 5-phosphate binding site. Arginine 20 provides a ligand contact to 3-amino-2-oxopropyl phosphate. The Proton acceptor role is filled by histidine 45. The 1-deoxy-D-xylulose 5-phosphate site is built by arginine 47 and histidine 52. Glutamate 72 (proton acceptor) is an active-site residue. Residue threonine 102 coordinates 1-deoxy-D-xylulose 5-phosphate. Histidine 193 acts as the Proton donor in catalysis. Residues glycine 194 and 215–216 (GH) contribute to the 3-amino-2-oxopropyl phosphate site.

It belongs to the PNP synthase family. In terms of assembly, homooctamer; tetramer of dimers.

It localises to the cytoplasm. The enzyme catalyses 3-amino-2-oxopropyl phosphate + 1-deoxy-D-xylulose 5-phosphate = pyridoxine 5'-phosphate + phosphate + 2 H2O + H(+). It functions in the pathway cofactor biosynthesis; pyridoxine 5'-phosphate biosynthesis; pyridoxine 5'-phosphate from D-erythrose 4-phosphate: step 5/5. Functionally, catalyzes the complicated ring closure reaction between the two acyclic compounds 1-deoxy-D-xylulose-5-phosphate (DXP) and 3-amino-2-oxopropyl phosphate (1-amino-acetone-3-phosphate or AAP) to form pyridoxine 5'-phosphate (PNP) and inorganic phosphate. This is Pyridoxine 5'-phosphate synthase from Shigella boydii serotype 4 (strain Sb227).